We begin with the raw amino-acid sequence, 370 residues long: MKFYRCSSPAPRFQAVTPGEKIRETSVLTSLVQPGAREKARQMVSGSSNDRFVVSRRRTGFGDCLWSLAAAWRFAKQTGRTLAIDWRGSCYLDEPFTNAFPVFFEPVEDIGGVRVICDDDINTRSFPGPFFPTWWNKPSFDCIYRPDEQIFRERDQLDQLFQSQRDSDANTVVCDACLMWRCDQEAEREIFRSIKPRPEIQARIDAIYREHFEPYSVIGIHVRHGNGEDIMGHAPYWADTERALRQIYNAIDEARSLSHAKPVRAFLCTDSALVLEQVSVKFPDVFAIPKQFQAPQAGPLHHPALGAEGGFSALTEMYLLARCDTVIRFPPTSAFTRYARLFAPRVIEFDLNDPGRLILIEDNSQALMAS.

Residues S47–E361 enclose the GT23 domain.

The protein belongs to the glycosyltransferase 23 family.

In terms of biological role, fucosyltransferase which adds the fucose moiety of the nod factor on its terminal reducing N-acetylglucosamine end. Uses GDP-fucose as the donor group. This chain is Nodulation protein Z (nodZ), found in Bradyrhizobium diazoefficiens (strain JCM 10833 / BCRC 13528 / IAM 13628 / NBRC 14792 / USDA 110).